The following is a 200-amino-acid chain: dTTP/UTP pyrophosphatase (200 aa).

Asp-81 acts as the Proton acceptor in catalysis.

This sequence belongs to the Maf family. YhdE subfamily. The cofactor is a divalent metal cation.

It is found in the cytoplasm. The catalysed reaction is dTTP + H2O = dTMP + diphosphate + H(+). It carries out the reaction UTP + H2O = UMP + diphosphate + H(+). Its function is as follows. Nucleoside triphosphate pyrophosphatase that hydrolyzes dTTP and UTP. May have a dual role in cell division arrest and in preventing the incorporation of modified nucleotides into cellular nucleic acids. The chain is dTTP/UTP pyrophosphatase from Albidiferax ferrireducens (strain ATCC BAA-621 / DSM 15236 / T118) (Rhodoferax ferrireducens).